A 297-amino-acid chain; its full sequence is Endonuclease G, mitochondrial (297 aa).

Residues 1–48 (MRALRAGLTLASGAGLGAVVEGWRRRREDARAAPGLLGRLPVLPVAAA) constitute a mitochondrion transit peptide. Thr128 carries the phosphothreonine; by GSK3-beta modification. His141 (proton acceptor) is an active-site residue. A Mg(2+)-binding site is contributed by Asn172. The segment at 286–296 (AGSLKAITAGS) is essential for deoxyribonuclease activity. Ser288 bears the Phosphoserine; by GSK3-beta mark.

The protein belongs to the DNA/RNA non-specific endonuclease family. In terms of assembly, homodimer; disulfide-linked. Homodimerization is essential for enzyme activity. Interacts with YWHAG. Requires Mg(2+) as cofactor. Post-translationally, GSK3-beta-mediated dual phosphorylations at Thr-128 and Ser-288 is necessary for its interaction with YWHAG and the induction of autophagy.

The protein localises to the mitochondrion. Its function is as follows. Endonuclease that preferentially catalyzes the cleavage of double-stranded 5-hydroxymethylcytosine (5hmC)-modified DNA. The 5hmC-modified nucleotide does not increase the binding affinity, but instead increases the efficiency of cutting and specifies the site of cleavage for the modified DNAs. Shows significantly higher affinity for four-stranded Holliday junction over duplex and single-stranded DNAs. Promotes conservative recombination when the DNA is 5hmC-modified. Promotes autophagy through the suppression of mTOR by its phosphorylation-mediated interaction with YWHAG and its endonuclease activity-mediated DNA damage response. GSK3-beta mediated phosphorylation of ENDOG enhances its interaction with YWHAG, leading to the release of TSC2 and PIK3C3 from YWHAG resulting in mTOR pathway suppression and autophagy initiation. Promotes cleavage of mtDNA in response to oxidative and nitrosative stress, in turn inducing compensatory mtDNA replication. The polypeptide is Endonuclease G, mitochondrial (ENDOG) (Homo sapiens (Human)).